The following is a 202-amino-acid chain: Phosphoenolpyruvate guanylyltransferase (202 aa).

Phosphoenolpyruvate is bound by residues T140, G156, and S159.

This sequence belongs to the CofC family.

The enzyme catalyses phosphoenolpyruvate + GTP + H(+) = enolpyruvoyl-2-diphospho-5'-guanosine + diphosphate. The protein operates within cofactor biosynthesis; coenzyme F420 biosynthesis. Functionally, guanylyltransferase that catalyzes the activation of phosphoenolpyruvate (PEP) as enolpyruvoyl-2-diphospho-5'-guanosine, via the condensation of PEP with GTP. It is involved in the biosynthesis of coenzyme F420, a hydride carrier cofactor. The protein is Phosphoenolpyruvate guanylyltransferase of Chloroflexus aggregans (strain MD-66 / DSM 9485).